Here is a 1755-residue protein sequence, read N- to C-terminus: METRSSKTRRSLASRTNECQGTMWAPTSPPAGSSSPSQPTWKSSLYSSLAYSEAFHYSFAARPRRLTQLALAQRPEPQLLRLRPSSLRTQDISHLLTGVFRNLYSAEVIGDEVSASLIKARGSENERHEEFVDQLQQIRELYKQRLDEFEMLERHITQAQARAIAENERVMSQAGVQDLESLVRLPPVKSVSRWCIDSELLRKHHLISPEDYYTDTVPFHSAPKGISLPGCSKLTFSCEKRSVQKKELNKKLEDSCRKKLAEFEDELDHTVDSLTWNLTPKAKERTREPLKKASQPRNKNWMNHLRVPQRELDRLLLARMESRNHFLKNPRFFPPNTRYGGKSLVFPPKKPAPIGEFQSTEPEQSCADTPVFLAKPPIGFFTDYEIGPVYEMVIALQNTTTTSRYLRVLPPSTPYFALGLGMFPGKGGMVAPGMTCQYIVQFFPDCLGDFDDFILVETQSAHTLLIPLQARRPPPVLTLSPVLDCGYCLIGGVKMTRFICKNVGFSVGRFCIMPKTSWPPLSFKAIATVGFVEQPPFGILPSVFELAPGHAILVEVLFSPKSLGKAEQTFIIMCDNCQIKELVTIGIGQLIALDLIYISGEKSQPDPGELTDLTAQHFIRFEPENLRSTARKQLIIRNATHVELAFYWQIMKPNLQPLMPGETFSMDSIKCYPDKETAFSIMPRKGVLSPHTDHEFILSFSPHELRDFHSVLQMVLEEVPEPVSSEAESLGHSSYSVDDVIVLEIEVKGSVEPFQVLLEPYALIIPGENYIGINVKKAFKMWNNSKSPIRYLWGKISDCHIIEVEPGTGVIEPSEVGDFELNFTGGVPGPTSQDLLCEIEDSPSPVVLHIEAVFKGPALIINVSALQFGLLRLGQKATNSIQIRNVSQLPATWRMKESPVSLQERPEDVSPFDIEPSSGQLHSLGECRVDITLEALHCQHLETVLELEVENGAWSYLPVYAEVQKPHVYLQSSQVEVRNLYLGVPTKTTITLINGTLLPTQFHWGKLLGHQAEFCMVTVSPKHGLLGPSEECQLKLELTAHTQEELTHLALPCHVSGMKKPLVLGISGKPQGLQVAITISKESSDCSTEQWPGHPKELRLDFGSAVPLRTRVTRQLILTNRSPIRTRFSLKFEYFGSPQNSLSKKTSLPNMPPALLKTVRMQEHLAKREQLDFMESMLSHGKGAAFFPHFSQGMLGPYQQLCIDITGCANMWGEYWDNLICTVGDLLPEVIPVHMAAVGCPISSLRTTSYTIDQAQKEPAMRFGTQVSGGDTVTRTLRLNNSSPCDIRLDWETYVPEDKEDRLVELLVFYGPPFPLRDQAGNELVCPDTPEGGCLLWSPGPSSSSEFSHETDSSVEGSSSASNRVAQKLISVILQAHEGVPSGHLYCISPKQVVVPAGGSSTIYISFTPMVLSPEILHKVECTGYALGFMSLDSKVEREIPGKRHRLQDFAVGPLKLDLHSYVRPAQLSVELDYGGSMEFQCQASDLIPEQPCSGVLSELVTTHHLKLTNTTEIPHYFRLMVSRPFSVSQDGASQDHRAPGPGQKQECEEETASADKQLVLQAQENMLVNVSFSLSLELLSYQKLPADQTLPGVDIQQSASGEREMVFTQNLLLEYTNQTTQVVPLRAVVAVPELQLSTSWVDFGTCFVSQQRVREVYLMNLSGCRSYWTMLMGQQEPAKAAVAFRVSPNSGLLEARSANAPPTSIALQVFFTARSSELYESTMVVEGVLGEKSCTLRLRGQGSYDERYMLPHQP.

The span at 1-12 (METRSSKTRRSL) shows a compositional bias: basic residues. Disordered regions lie at residues 1–39 (METR…PSQP), 1339–1360 (PGPS…GSSS), and 1529–1553 (SQDG…EETA). Over residues 30–39 (PAGSSSPSQP) the composition is skewed to low complexity.

As to quaternary structure, interacts with alpha- and beta-tubulin. Interacts with BBS2, BBS4, BBS5, MKKS, TCP1, CCT2, CCT3, CCT4, CCT5 and CCT7. As to expression, expressed in all tissues examined. Expression is highest in prostate and testis.

The protein resides in the cytoplasm. Its function is as follows. Essential for spermatogenesis and male fertility. May play an important role in sperm head and tail formation. May act as a tumor suppressor by inhibiting cell proliferation. The polypeptide is Deleted in lung and esophageal cancer protein 1 (Homo sapiens (Human)).